A 115-amino-acid polypeptide reads, in one-letter code: Large ribosomal subunit protein bL19 (115 aa).

Belongs to the bacterial ribosomal protein bL19 family.

This protein is located at the 30S-50S ribosomal subunit interface and may play a role in the structure and function of the aminoacyl-tRNA binding site. This Thermosipho melanesiensis (strain DSM 12029 / CIP 104789 / BI429) protein is Large ribosomal subunit protein bL19.